Here is a 465-residue protein sequence, read N- to C-terminus: Dihydrolipoyl dehydrogenase (465 aa).

Residues 34–42, Lys-51, and Gly-114 each bind FAD; that span reads EEREAGGTC. Cys-42 and Cys-47 are joined by a disulfide. NAD(+) contacts are provided by residues 180 to 184, Glu-203, Val-237, and 264 to 267; these read GGGVI and SIGR. Asp-307 and Ala-315 together coordinate FAD. The active-site Proton acceptor is His-439.

It belongs to the class-I pyridine nucleotide-disulfide oxidoreductase family. The cofactor is FAD.

Its subcellular location is the cytoplasm. It catalyses the reaction N(6)-[(R)-dihydrolipoyl]-L-lysyl-[protein] + NAD(+) = N(6)-[(R)-lipoyl]-L-lysyl-[protein] + NADH + H(+). In terms of biological role, the branched-chain alpha-keto dehydrogenase complex catalyzes the overall conversion of alpha-keto acids to acyl-CoA and CO(2). It contains multiple copies of 3 enzymatic components: branched-chain alpha-keto acid decarboxylase (E1), lipoamide acyltransferase (E2) and lipoamide dehydrogenase (E3). The protein is Dihydrolipoyl dehydrogenase (lpdA) of Chlamydia muridarum (strain MoPn / Nigg).